The chain runs to 472 residues: Adenosylhomocysteinase (472 aa).

Residues Thr-62, Asp-137, and Glu-197 each coordinate substrate. Thr-198–Thr-200 serves as a coordination point for NAD(+). Positions 227 and 231 each coordinate substrate. Residues Asn-232, Gly-261–Gly-266, Glu-284, Asn-319, Ile-340–His-342, and Asn-385 contribute to the NAD(+) site.

Belongs to the adenosylhomocysteinase family. NAD(+) serves as cofactor.

Its subcellular location is the cytoplasm. The catalysed reaction is S-adenosyl-L-homocysteine + H2O = L-homocysteine + adenosine. Its pathway is amino-acid biosynthesis; L-homocysteine biosynthesis; L-homocysteine from S-adenosyl-L-homocysteine: step 1/1. In terms of biological role, may play a key role in the regulation of the intracellular concentration of adenosylhomocysteine. This is Adenosylhomocysteinase from Bordetella bronchiseptica (strain ATCC BAA-588 / NCTC 13252 / RB50) (Alcaligenes bronchisepticus).